Here is a 206-residue protein sequence, read N- to C-terminus: Large ribosomal subunit protein uL4 (206 aa).

Positions 44-87 (NRQGTQSAKTRSEVSGGGRKPWRQKGTGHARQGSTRSPQWTGGG) are disordered.

It belongs to the universal ribosomal protein uL4 family. As to quaternary structure, part of the 50S ribosomal subunit.

Its function is as follows. One of the primary rRNA binding proteins, this protein initially binds near the 5'-end of the 23S rRNA. It is important during the early stages of 50S assembly. It makes multiple contacts with different domains of the 23S rRNA in the assembled 50S subunit and ribosome. Forms part of the polypeptide exit tunnel. The polypeptide is Large ribosomal subunit protein uL4 (Lachnospira eligens (strain ATCC 27750 / DSM 3376 / VPI C15-48 / C15-B4) (Eubacterium eligens)).